An 887-amino-acid polypeptide reads, in one-letter code: Exocyst complex component SEC3A (887 aa).

2 coiled-coil regions span residues 221–248 and 281–301; these read IGEA…AILE and LRHM…LEMQ. The segment at 542-581 is disordered; that stretch reads GAGNDKKSQSNNDDGNDDDDLGIMDIDETDKKPGKNSPDL. The span at 555 to 569 shows a compositional bias: acidic residues; it reads DGNDDDDLGIMDIDE.

It belongs to the SEC3 family. The exocyst complex is composed of SEC3, SEC5, SEC6, SEC8, SEC10, EXO70A1 and EXO84B. Interacts with EXO70A1, SEC5A and ICR1, but not with ICR2. Binds to EXO70H1. Binds directly to B1L. In terms of tissue distribution, widely expressed. Preferentially expressed in tissues containing dividing and expanding cells, such as the shoot apical meristem, root tip, lateral root primordia and developing embryos.

The protein resides in the cytoplasm. It is found in the cytosol. It localises to the cell membrane. Its subcellular location is the cytoskeleton. The protein localises to the phragmoplast. The protein resides in the secreted. It is found in the extracellular exosome. Functionally, component of the exocyst complex involved in the docking of exocytic vesicles with fusion sites on the plasma membrane during regulated or polarized secretion. Involved in polarized cell growth and organ morphogenesis. During cytokinesis, involved in cell plate initiation, cell plate maturation and formation of new primary cell wall. During cytokinesis, involved in cell plate initiation, cell plate maturation and formation of new primary cell wall. In Arabidopsis thaliana (Mouse-ear cress), this protein is Exocyst complex component SEC3A.